Reading from the N-terminus, the 176-residue chain is Immunity factor for TNT homolog (176 aa).

In terms of assembly, interacts with the tuberculosis necrotizing toxin (TNT) homolog, the C-terminal domain of the outer membrane channel protein CpnT.

Its function is as follows. Antitoxin for tuberculosis necrotizing toxin (TNT) homolog. Acts by binding directly to TNT, which inhibits NAD(+) glycohydrolase activity of TNT and protects M.bovis from self-poisoning. The chain is Immunity factor for TNT homolog from Mycobacterium bovis (strain BCG / Pasteur 1173P2).